A 414-amino-acid chain; its full sequence is MFSFYFDNKKISKLLMVGYGSTGKSVCDFLANFIDLSVDISQNDDDFINCDLEQYDLITVSPGIPLNKSPYRVLSKFKQKIVSDIDLFYQSIRNTKAKMIAVTGSNGKSTIVTMLDFVLRDMGYKSILVGNIGTPPLNKIGEKFDYCVVEVSSFQIDLFNSVEFDLGCVVNVSLDHLDRYKNYEEYKQSKLNLAKFSKDFFVYDVHNTGIKYAGEYQIVRGSIYKDTTKLLDITETNLFGEHNLENIIVVLNIFDRFGIDISKAVAAIKKFKGLKHRCEIVKNIAGVTYINDSKGTNVGATIAALNSITSSKNIILLLGGVAKGGDFSLMSKSLAKYVKYVYLYGQDKEYIENYIKDMCRYQICNDMKDAFRLASQKAQDSEIVLLSPACASFDEFSGYAERGEVFEKLVAELK.

Position 104–110 (104–110 (GSNGKST)) interacts with ATP.

It belongs to the MurCDEF family.

It localises to the cytoplasm. It catalyses the reaction UDP-N-acetyl-alpha-D-muramoyl-L-alanine + D-glutamate + ATP = UDP-N-acetyl-alpha-D-muramoyl-L-alanyl-D-glutamate + ADP + phosphate + H(+). It functions in the pathway cell wall biogenesis; peptidoglycan biosynthesis. In terms of biological role, cell wall formation. Catalyzes the addition of glutamate to the nucleotide precursor UDP-N-acetylmuramoyl-L-alanine (UMA). This is UDP-N-acetylmuramoylalanine--D-glutamate ligase from Francisella philomiragia subsp. philomiragia (strain ATCC 25017 / CCUG 19701 / FSC 153 / O#319-036).